A 378-amino-acid polypeptide reads, in one-letter code: Acetylornithine deacetylase (378 aa).

H76 serves as a coordination point for Zn(2+). D78 is an active-site residue. D108 is a binding site for Zn(2+). E140 is a catalytic residue. The Zn(2+) site is built by E141, E165, and H351.

Belongs to the peptidase M20A family. ArgE subfamily. Homodimer. Requires Zn(2+) as cofactor. It depends on Co(2+) as a cofactor. Glutathione is required as a cofactor.

The protein resides in the cytoplasm. The catalysed reaction is N(2)-acetyl-L-ornithine + H2O = L-ornithine + acetate. It participates in amino-acid biosynthesis; L-arginine biosynthesis; L-ornithine from N(2)-acetyl-L-ornithine (linear): step 1/1. Its function is as follows. Catalyzes the hydrolysis of the amide bond of N(2)-acetylated L-amino acids. Cleaves the acetyl group from N-acetyl-L-ornithine to form L-ornithine, an intermediate in L-arginine biosynthesis pathway, and a branchpoint in the synthesis of polyamines. The sequence is that of Acetylornithine deacetylase from Vibrio campbellii (strain ATCC BAA-1116).